Consider the following 299-residue polypeptide: Bifunctional protein FolD 2 (299 aa).

NADP(+)-binding positions include 168–170 (GRS), serine 193, and isoleucine 234.

The protein belongs to the tetrahydrofolate dehydrogenase/cyclohydrolase family. In terms of assembly, homodimer.

The catalysed reaction is (6R)-5,10-methylene-5,6,7,8-tetrahydrofolate + NADP(+) = (6R)-5,10-methenyltetrahydrofolate + NADPH. The enzyme catalyses (6R)-5,10-methenyltetrahydrofolate + H2O = (6R)-10-formyltetrahydrofolate + H(+). It functions in the pathway one-carbon metabolism; tetrahydrofolate interconversion. In terms of biological role, catalyzes the oxidation of 5,10-methylenetetrahydrofolate to 5,10-methenyltetrahydrofolate and then the hydrolysis of 5,10-methenyltetrahydrofolate to 10-formyltetrahydrofolate. This is Bifunctional protein FolD 2 from Rhizobium meliloti (strain 1021) (Ensifer meliloti).